The following is a 1179-amino-acid chain: Integrin alpha-1 (1179 aa).

A signal peptide spans 1-28 (MVPRRPASLEVTVACIWLLTVILGVCIS). Over 29–1141 (FNVDVKNSMS…SKDGLPGRVP (1113 aa)) the chain is Extracellular. An FG-GAP 1 repeat occupies 30-91 (NVDVKNSMSF…CPVGRERSMP (62 aa)). A disulfide bridge connects residues Cys82 and Cys92. N-linked (GlcNAc...) asparagine glycosylation is found at Asn100, Asn105, Asn112, Asn217, Asn317, Asn341, Asn402, Asn418, and Asn459. The FG-GAP 2 repeat unit spans residues 101-160 (TSIPNVTEIKENMTFGSTLVTNPKGGFLACGPLYAYRCGHLHYTTGICSDVSPTFQVVNS). Residues 175 to 364 (IVLDGSNSIY…LGERIFALEA (190 aa)) form the VWFA domain. The stretch at 365-417 (TADQSAASFEMEMSQTGFSAHYSQDWVMLGAVGAYDWNGTVVMQKANQIVIPH) is one FG-GAP 3 repeat. 4 FG-GAP repeats span residues 422 to 474 (QTEP…DGDV), 475 to 537 (NILQ…RFEY), 556 to 614 (SCTK…TIRK), and 618 to 678 (QRIP…FEPN). 4 residues coordinate Ca(2+): Asp497, Asp499, Asp501, and Asp505. Asn531 carries N-linked (GlcNAc...) asparagine glycosylation. The Ca(2+) site is built by Asp579, Asn581, Asp583, Asp587, Asp641, Asn643, Asp645, and Asp649. Cys687 and Cys696 are joined by a disulfide. 3 N-linked (GlcNAc...) asparagine glycosylation sites follow: Asn698, Asn747, and Asn779. A disulfide bond links Cys702 and Cys755. A disulfide bridge links Cys807 with Cys813. Residues Asn839, Asn882, Asn907, Asn938, Asn965, Asn973, and Asn1007 are each glycosylated (N-linked (GlcNAc...) asparagine). A disulfide bridge connects residues Cys877 and Cys885. Cystine bridges form between Cys1029/Cys1062 and Cys1065/Cys1072. N-linked (GlcNAc...) asparagine glycosylation is found at Asn1083, Asn1102, and Asn1113. Residues 1142-1164 (LWVILLSAFAGLLLLMLLILALW) form a helical membrane-spanning segment. The Cytoplasmic segment spans residues 1165–1179 (KIGFFKRPLKKKMEK). The GFFKR motif signature appears at 1167–1171 (GFFKR).

Belongs to the integrin alpha chain family. Heterodimer of an alpha and a beta subunit. Alpha-1 associates with beta-1. Interacts with RAB21. Interacts (via cytoplasmic domain) with PTPN2; activates PTPN2 phosphatase activity towards EGFR and negatively regulates EGF signaling.

It is found in the membrane. Functionally, integrin alpha-1/beta-1 is a receptor for laminin and collagen. It recognizes the proline-hydroxylated sequence G-F-P-G-E-R in collagen. Involved in anchorage-dependent, negative regulation of EGF-stimulated cell growth. This chain is Integrin alpha-1 (Itga1), found in Mus musculus (Mouse).